We begin with the raw amino-acid sequence, 423 residues long: Mitogen-activated protein kinase 9 (423 aa).

A Protein kinase domain is found at 26 to 321 (YQQLKPIGSG…VDEALRHPYI (296 aa)). ATP contacts are provided by residues 32 to 40 (IGSGAQGIV) and Lys55. The active-site Proton acceptor is Asp151. Thr183 bears the Phosphothreonine; by MAP2K7 mark. Positions 183-185 (TPY) match the TXY motif. Tyr185 carries the post-translational modification Phosphotyrosine; by MAP2K4. Over residues 366–375 (RSKNGVKDQP) the composition is skewed to basic and acidic residues. The segment at 366-423 (RSKNGVKDQPSDAAVSSKATPSQSSSINDISSMSTEHTLASDTDSSLDASTGPLEGCR) is disordered. Over residues 387–416 (SQSSSINDISSMSTEHTLASDTDSSLDAST) the composition is skewed to low complexity.

This sequence belongs to the protein kinase superfamily. CMGC Ser/Thr protein kinase family. MAP kinase subfamily. As to quaternary structure, interacts with MECOM. Binds to at least four scaffolding proteins, MAPK8IP1/JIP-1, MAPK8IP2/JIP-2, MAPK8IP3/JIP-3/JSAP1 and SPAG9/MAPK8IP4/JIP-4. These proteins also bind other components of the JNK signaling pathway. Interacts with NFATC4. Interacts with ATF7; the interaction does not phosphorylate ATF7 but acts as a docking site for ATF7-associated partners such as JUN. Interacts with BCL10. Interacts with CTNNB1 and GSK3B. Interacts with DCLK2. Interacts with MAPKBP1. Interacts with POU5F1; phosphorylates POU5F1 at 'Ser-347'. Found in a complex with SH3RF1, RAC2, MAP3K7/TAK1, MAP2K7/MKK7, MAPK8IP1/JIP1 and MAPK8/JNK1. It depends on Mg(2+) as a cofactor. Dually phosphorylated on Thr-183 and Tyr-185 by MAP2K7 and MAP2K4, which activates the enzyme. Autophosphorylated in vitro.

It localises to the cytoplasm. Its subcellular location is the nucleus. The enzyme catalyses L-seryl-[protein] + ATP = O-phospho-L-seryl-[protein] + ADP + H(+). It carries out the reaction L-threonyl-[protein] + ATP = O-phospho-L-threonyl-[protein] + ADP + H(+). Activated by threonine and tyrosine phosphorylation by either of two dual specificity kinases, MAP2K4 and MAP2K7. MAP2K4 shows a strong preference for Tyr-185 while MAP2K7 phosphorylates Tyr-183 preferentially. Inhibited by dual specificity phosphatases, such as DUSP1. Serine/threonine-protein kinase involved in various processes such as cell proliferation, differentiation, migration, transformation and programmed cell death. Extracellular stimuli such as pro-inflammatory cytokines or physical stress stimulate the stress-activated protein kinase/c-Jun N-terminal kinase (SAP/JNK) signaling pathway. In this cascade, two dual specificity kinases MAP2K4/MKK4 and MAP2K7/MKK7 phosphorylate and activate MAPK9/JNK2. In turn, MAPK9/JNK2 phosphorylates a number of transcription factors, primarily components of AP-1 such as JUN and ATF2 and thus regulates AP-1 transcriptional activity. In response to oxidative or ribotoxic stresses, inhibits rRNA synthesis by phosphorylating and inactivating the RNA polymerase 1-specific transcription initiation factor RRN3. Promotes stressed cell apoptosis by phosphorylating key regulatory factors including TP53 and YAP1. In T-cells, MAPK8 and MAPK9 are required for polarized differentiation of T-helper cells into Th1 cells. Upon T-cell receptor (TCR) stimulation, is activated by CARMA1, BCL10, MAP2K7 and MAP3K7/TAK1 to regulate JUN protein levels. Plays an important role in the osmotic stress-induced epithelial tight-junctions disruption. When activated, promotes beta-catenin/CTNNB1 degradation and inhibits the canonical Wnt signaling pathway. Also participates in neurite growth in spiral ganglion neurons. Phosphorylates the CLOCK-BMAL1 heterodimer and plays a role in the regulation of the circadian clock. Phosphorylates POU5F1, which results in the inhibition of POU5F1's transcriptional activity and enhances its proteasomal degradation. Phosphorylates ALKBH5 in response to reactive oxygen species (ROS), promoting ALKBH5 sumoylation and inactivation. This is Mitogen-activated protein kinase 9 (Mapk9) from Rattus norvegicus (Rat).